Here is a 1217-residue protein sequence, read N- to C-terminus: Genetic suppressor element 1 (1217 aa).

The segment at 1 to 155 (MKGMSHEPKS…SRSSSGGRER (155 aa)) is disordered. The residue at position 10 (serine 10) is a Phosphoserine. A compositionally biased stretch (polar residues) spans 15–33 (MLSTATRTTATVNPLTPSP). Low complexity-rich tracts occupy residues 43–63 (SPAT…FAAA) and 76–89 (GSSL…VSSP). A phosphoserine mark is found at serine 84 and serine 95. The segment covering 103-114 (VPMGPIIVPPGG) has biased composition (low complexity). The residue at position 305 (arginine 305) is an Asymmetric dimethylarginine. Residues 321 to 403 (ERMSGLSAER…REKELLAAKA (83 aa)) are a coiled coil. Disordered stretches follow at residues 324-385 (SGLS…EREL) and 418-465 (RGHA…HHTV). Positions 331–385 (LQMDEELRREREREREREREREADREREKEREREREKEREQEKEREREKEREREL) are enriched in basic and acidic residues. Threonine 433 carries the post-translational modification Phosphothreonine. The span at 450–465 (PVQHPLHPVPTPHHTV) shows a compositional bias: low complexity. Residue lysine 496 is modified to N6-acetyllysine. 3 disordered regions span residues 526–579 (HLDM…QLHA), 633–675 (KAEE…GPFL), and 699–720 (FGEL…PRAP). Basic and acidic residues-rich tracts occupy residues 551-561 (NRHEPGGRDPP) and 633-645 (KAEE…EPAP). Residues 711–720 (PYRPPVPRAP) are compositionally biased toward pro residues. Lysine 739 carries the N6-acetyllysine modification. A Phosphoserine modification is found at serine 766. 4 disordered regions span residues 807 to 858 (KEEL…NNSP), 903 to 930 (ADSL…SLDV), 948 to 981 (EPGK…EAPG), and 1068 to 1122 (LQSS…PKRK). The span at 813–822 (QKRRKRRRML) shows a compositional bias: basic residues. A phosphoserine mark is found at serine 826 and serine 828. 2 stretches are compositionally biased toward polar residues: residues 831 to 840 (TIQSKRQTPS) and 847 to 858 (TRYSPDEMNNSP). The residue at position 857 (serine 857) is a Phosphoserine. Phosphothreonine is present on threonine 907. Serine 909 bears the Phosphoserine mark. A compositionally biased stretch (polar residues) spans 1068-1085 (LQSSSRAPPPQHNGQQEP). Over residues 1099 to 1117 (RDSEEEEEEDDEDGEDEEE) the composition is skewed to acidic residues. Serine 1101 is modified (phosphoserine). Positions 1127-1201 (EAVFEAYQEH…ELDHLRKCLA (75 aa)) form a coiled coil.

As to quaternary structure, may be a component of a BHC histone deacetylase complex that contains HDAC1, HDAC2, HMG20B/BRAF35, KDM1A, RCOR1/CoREST, PHF21A/BHC80, ZMYM2, ZNF217, ZMYM3, GSE1 and GTF2I.

In Homo sapiens (Human), this protein is Genetic suppressor element 1 (GSE1).